A 96-amino-acid chain; its full sequence is Bublin coiled-coil protein (96 aa).

Residues 39–79 (NSCLDDIEDRNDALNGKLHELLESNRQARKDFRQQLNDEEA) adopt a coiled-coil conformation. Residues 63–96 (NRQARKDFRQQLNDEEASPPPAEDPASRDTQTED) form a disordered region. The span at 87-96 (PASRDTQTED) shows a compositional bias: basic and acidic residues.

The protein belongs to the UPF0184 (EST00098) family.

The protein resides in the cell junction. It localises to the cytoplasm. The protein localises to the cytoskeleton. Functionally, essential for intermediate filament organization in intestinal cells, interacts with intermediate filament and regulates intestinal lumen morphology. This Ctenopharyngodon idella (Grass carp) protein is Bublin coiled-coil protein (bbln).